Reading from the N-terminus, the 454-residue chain is Phosphoglucosamine mutase (454 aa).

The active-site Phosphoserine intermediate is Ser-104. Residues Ser-104, Asp-244, Asp-246, and Asp-248 each coordinate Mg(2+). At Ser-104 the chain carries Phosphoserine.

The protein belongs to the phosphohexose mutase family. Requires Mg(2+) as cofactor. Post-translationally, activated by phosphorylation.

It catalyses the reaction alpha-D-glucosamine 1-phosphate = D-glucosamine 6-phosphate. In terms of biological role, catalyzes the conversion of glucosamine-6-phosphate to glucosamine-1-phosphate. The chain is Phosphoglucosamine mutase from Lacticaseibacillus paracasei (strain ATCC 334 / BCRC 17002 / CCUG 31169 / CIP 107868 / KCTC 3260 / NRRL B-441) (Lactobacillus paracasei).